Here is a 480-residue protein sequence, read N- to C-terminus: ATP synthase subunit beta (480 aa).

154-161 (GGAGVGKT) is an ATP binding site.

This sequence belongs to the ATPase alpha/beta chains family. F-type ATPases have 2 components, CF(1) - the catalytic core - and CF(0) - the membrane proton channel. CF(1) has five subunits: alpha(3), beta(3), gamma(1), delta(1), epsilon(1). CF(0) has four main subunits: a(1), b(1), b'(1) and c(9-12).

Its subcellular location is the cell inner membrane. The enzyme catalyses ATP + H2O + 4 H(+)(in) = ADP + phosphate + 5 H(+)(out). Its function is as follows. Produces ATP from ADP in the presence of a proton gradient across the membrane. The catalytic sites are hosted primarily by the beta subunits. In Bradyrhizobium sp. (strain ORS 278), this protein is ATP synthase subunit beta.